The primary structure comprises 626 residues: Ankyrin repeat domain-containing protein 13B (626 aa).

M1 is subject to N-acetylmethionine. ANK repeat units follow at residues 47 to 76 (RGRT…DVGR) and 80 to 109 (SGWT…YQRV). The tract at residues 442-474 (PVPSVRGSPSSETPSPGSDSSSVSSSSSTTSCR) is disordered. Residues 449-472 (SPSSETPSPGSDSSSVSSSSSTTS) show a composition bias toward low complexity. Residues 503–522 (DDDDLLQFAIQQSLLEAGSE) enclose the UIM 1 domain. Disordered regions lie at residues 534–590 (NSKP…DEQL) and 595–614 (ELSA…EEEE). Pro residues predominate over residues 554-573 (PPTPQRQPAPPASVPSPRPS). UIM domains are found at residues 585–604 (SYDE…QEER) and 610–626 (QEEE…LTEQ).

As to quaternary structure, interacts with EGFR (ubiquitinated); the interaction is direct and may regulate EGFR internalization.

The protein resides in the cell membrane. It is found in the late endosome. It localises to the early endosome. Ubiquitin-binding protein that specifically recognizes and binds 'Lys-63'-linked ubiquitin. Does not bind 'Lys-48'-linked ubiquitin. Positively regulates the internalization of ligand-activated EGFR by binding to the Ub moiety of ubiquitinated EGFR at the cell membrane. This Homo sapiens (Human) protein is Ankyrin repeat domain-containing protein 13B (ANKRD13B).